Consider the following 154-residue polypeptide: RxLR effector protein PITG_12737 (154 aa).

The first 16 residues, 1–16 (MRVYFILILAVATVSG), serve as a signal peptide directing secretion. The short motif at 42-58 (RLLRAELTTDETYPEER) is the RxLR-dEER element.

This sequence belongs to the RxLR effector family.

It is found in the secreted. It localises to the host nucleus. Its subcellular location is the host cytoplasm. Its function is as follows. Effector that enhances P.infestans colonization of Nicotiana benthamiana leaves. This Phytophthora infestans (strain T30-4) (Potato late blight agent) protein is RxLR effector protein PITG_12737.